We begin with the raw amino-acid sequence, 170 residues long: Large ribosomal subunit protein uL11 (170 aa).

The protein belongs to the universal ribosomal protein uL11 family. As to quaternary structure, part of the ribosomal stalk of the 50S ribosomal subunit. Interacts with L10 and the large rRNA to form the base of the stalk. L10 forms an elongated spine to which L12 dimers bind in a sequential fashion forming a multimeric L10(L12)X complex.

Its function is as follows. Forms part of the ribosomal stalk which helps the ribosome interact with GTP-bound translation factors. This Saccharolobus solfataricus (strain ATCC 35092 / DSM 1617 / JCM 11322 / P2) (Sulfolobus solfataricus) protein is Large ribosomal subunit protein uL11.